The following is a 475-amino-acid chain: UDP-glycosyltransferase 1 (475 aa).

Residue histidine 15 is the Proton acceptor of the active site. An anthocyanidin is bound at residue histidine 15. The active-site Charge relay is aspartate 117. UDP-alpha-D-glucose is bound by residues alanine 345, glutamine 347, histidine 362, tryptophan 365, asparagine 366, serine 367, and glutamate 370. Glycine 385 contributes to the an anthocyanidin binding site. UDP-alpha-D-glucose-binding residues include glutamate 386 and glutamine 387.

Belongs to the UDP-glycosyltransferase family. In terms of tissue distribution, mostly expressed in leaves and flowers, and, to a lower extent, in roots and stems.

The catalysed reaction is (20S)-protopanaxadiol + UDP-alpha-D-glucose = (20S)-ginsenoside C-K + UDP + H(+). It catalyses the reaction (20S)-ginsenoside Rg3 + UDP-alpha-D-glucose = (20S)-ginsenoside Rd + UDP + H(+). It carries out the reaction (20S)-ginsenoside Rh2 + UDP-alpha-D-glucose = (20S)-ginsenoside F2 + UDP + H(+). The enzyme catalyses (20S)-protopanaxatriol + UDP-alpha-D-glucose = (20S)-ginsenoside F1 + UDP + H(+). The catalysed reaction is dammarenediol-II + UDP-alpha-D-glucose = (20S)-20-O-(beta-D-glucosyl)-3-hydroxydammarene + UDP + H(+). It participates in secondary metabolite biosynthesis; terpenoid biosynthesis. In terms of biological role, component of the dammarane-type triterpene saponins (e.g. ginsenosides or panaxosides) biosynthetic pathway. Glycosyltransferase that catalyzes the biosynthesis of ginsenoside F1 from protopanaxatriol (PPT). Triggers C20-OH glycosylation of ginsenoside Rg3 to produce ginsenoside Rd. Mediates the conversion of protopanaxadiol (PPD) to the ginsenoside compound K. catalyzes the production of 20S-O-beta-(D-glucosyl)-dammarenediol II form dammarenediol II (DM). The chain is UDP-glycosyltransferase 1 from Panax ginseng (Korean ginseng).